A 276-amino-acid polypeptide reads, in one-letter code: Diaminopimelate epimerase (276 aa).

Substrate contacts are provided by Asn13, Gln46, and Asn66. Cys75 acts as the Proton donor in catalysis. Substrate is bound by residues 76-77 (GN), Asn159, Asn192, and 210-211 (ER). The Proton acceptor role is filled by Cys219. 220–221 (GT) lines the substrate pocket.

The protein belongs to the diaminopimelate epimerase family. As to quaternary structure, homodimer.

Its subcellular location is the cytoplasm. It carries out the reaction (2S,6S)-2,6-diaminopimelate = meso-2,6-diaminopimelate. It functions in the pathway amino-acid biosynthesis; L-lysine biosynthesis via DAP pathway; DL-2,6-diaminopimelate from LL-2,6-diaminopimelate: step 1/1. In terms of biological role, catalyzes the stereoinversion of LL-2,6-diaminopimelate (L,L-DAP) to meso-diaminopimelate (meso-DAP), a precursor of L-lysine and an essential component of the bacterial peptidoglycan. The polypeptide is Diaminopimelate epimerase (Aeromonas salmonicida (strain A449)).